A 183-amino-acid chain; its full sequence is Peptide deformylase (183 aa).

Fe cation contacts are provided by C111 and H154. E155 is an active-site residue. H158 contacts Fe cation.

The protein belongs to the polypeptide deformylase family. Requires Fe(2+) as cofactor.

It carries out the reaction N-terminal N-formyl-L-methionyl-[peptide] + H2O = N-terminal L-methionyl-[peptide] + formate. Removes the formyl group from the N-terminal Met of newly synthesized proteins. Requires at least a dipeptide for an efficient rate of reaction. N-terminal L-methionine is a prerequisite for activity but the enzyme has broad specificity at other positions. The sequence is that of Peptide deformylase from Staphylococcus aureus (strain COL).